The chain runs to 478 residues: Divinyl ether synthase CYP74D3 (478 aa).

Cysteine 432 is a binding site for heme.

It belongs to the cytochrome P450 family. 9-divinyl ether synthase subfamily. In terms of tissue distribution, not detected in leaves, stems or roots of healthy plants.

The protein localises to the cytoplasm. Its subcellular location is the cytosol. The enzyme catalyses (9S)-hydroperoxy-(10E,12Z)-octadecadienoate = colneleate + H2O. It catalyses the reaction (9S)-hydroperoxy-(10E,12Z,15Z)-octadecatrienoate = colnelenate + H2O. Functionally, strictly inducible cytochrome P450 involved in the biosynthesis of the anti-fungal toxins colneleate and colnelenate. Can use (9S)-hydroperoxy-(10E,12Z)-octadecadienoate (9-HPOD) and (9S)-hydroperoxy-(10E,12Z,15Z)-octadecatrienoate (9-HPOT) as substrates, but has a very low activity with the corresponding 13-hydroperoxides (13-HPOD and 13-POT). The sequence is that of Divinyl ether synthase CYP74D3 from Nicotiana tabacum (Common tobacco).